Consider the following 119-residue polypeptide: Large ribosomal subunit protein bL20 (119 aa).

It belongs to the bacterial ribosomal protein bL20 family.

Binds directly to 23S ribosomal RNA and is necessary for the in vitro assembly process of the 50S ribosomal subunit. It is not involved in the protein synthesizing functions of that subunit. The polypeptide is Large ribosomal subunit protein bL20 (Acidovorax sp. (strain JS42)).